The following is a 452-amino-acid chain: Membrane-bound lytic murein transglycosylase D (452 aa).

The N-terminal stretch at 1-15 (MKAKAILLASVLLVG) is a signal peptide. C16 carries the N-palmitoyl cysteine lipid modification. The S-diacylglycerol cysteine moiety is linked to residue C16. The interval 113-198 (NMPMELVLLP…LLTVAAYNSG (86 aa)) is slt-type domain. E125 is a catalytic residue. 2 LysM domains span residues 341–384 (RVYT…SLTI) and 400–448 (ITYR…KNNN).

This sequence belongs to the transglycosylase Slt family.

The protein localises to the cell membrane. The catalysed reaction is Exolytic cleavage of the (1-&gt;4)-beta-glycosidic linkage between N-acetylmuramic acid (MurNAc) and N-acetylglucosamine (GlcNAc) residues in peptidoglycan, from either the reducing or the non-reducing ends of the peptidoglycan chains, with concomitant formation of a 1,6-anhydrobond in the MurNAc residue.. Its function is as follows. Murein-degrading enzyme. May play a role in recycling of muropeptides during cell elongation and/or cell division. In Escherichia coli O6:H1 (strain CFT073 / ATCC 700928 / UPEC), this protein is Membrane-bound lytic murein transglycosylase D (mltD).